A 206-amino-acid chain; its full sequence is Large ribosomal subunit protein uL4 (206 aa).

Residues 46-77 (GTRAQKDREQVRHSTKKPFKQKGTGNARAGMT) are disordered.

This sequence belongs to the universal ribosomal protein uL4 family. Part of the 50S ribosomal subunit.

Functionally, one of the primary rRNA binding proteins, this protein initially binds near the 5'-end of the 23S rRNA. It is important during the early stages of 50S assembly. It makes multiple contacts with different domains of the 23S rRNA in the assembled 50S subunit and ribosome. Its function is as follows. Forms part of the polypeptide exit tunnel. The protein is Large ribosomal subunit protein uL4 of Paracidovorax citrulli (strain AAC00-1) (Acidovorax citrulli).